A 1576-amino-acid chain; its full sequence is MKMRNHKENGNGSEMGESTKSLAKMEPENNNKISVVSVSKLLLKDSNGANSRSSNSNASFSSASVAGSVQDDLPHHNSSSSQLGQQHGSSLDQCGLTQAGLEEYNNRSSSYYDQTAFHHQKQPSYAQSEGYHSYVSSSDSTSATPFLDKLRQESDLLSRQSHHWSENDLSSVCSNSVAPSPIPLLARQSHSHSHSHAHSHSNSHGHSHGHAHSASSSSSSNNNSNGSATNNNNNNSSESTSSTETLKWLGSMSDISEASHATGYSAISESVSSSQRIVHSSRVPTPKRHHSESVLYLHNNEEQGDSSPTASNSSQMMISEEANGEESPPSVQPLRIQHRHSPSYPPVHTSMVLHHFQQQQQQQQDYQHPSRHHTNQSTLSTQSSLLELASPTEKPRSLMGQSHSMGDLQQKNPHQNPMLGRSAGQQHKSSISVTISSSEAVVTIAPQPPAGKPSKLQLSLGKSEALSCSTPNMGEQSPTNSIDSYRSNHRLFPVSTYTEPVHSNTSQYVQHPKPQFSSGLHKSAKLPVITPAGATVQPTWHSVAERINDFERSQLGEPPKFAYLEPTKTHRLSNPALKALQKNAVQSYVERQQQQQKEEQQLLRPHSQSYQACHVERKSLPNNLSPIMVGLPTGSNSASTRDCSSPTPPPPPRRSGSLLPNLLRRSSSASDYAEFRELHQAQGQVKGPSIRNISNAEKISFNDCGMPPPPPPPRGRLAVPTRRTSSATEYAPMRDKLLLQQAAALAHQQHHPQQHRHAQPPHVPPERPPKHPNLRVPSPELPPPPQSELDISYTFDEPLPPPPPPEVLQPRPPPSPNRRNCFAGASTRRTTYEAPPPTAIVAAKVPPLVPKKPTSLQHKHLANGGGGSRKRPHHATPQPILENVASPVAPPPPLLPRARSTAHDNVIASNLESNQQKRSNSKASYLPRQSLEKLNNTDPDHGIYKLTLTSNEDLVAHTKPSYGVTGKLPNNLPDVLPLGVKLHQQPKLQPGSPNGDANVTLRYGSNNNLTGNSPTVAPPPYYGGGQRYSTPVLGQGYGKSSKPVTPQQYTRSQSYDVKHTSAVTMPTMSQSHVDLKQAAHDLETTLEEVLPTATPTPTPTPTPTPPRLSPASSHSDCSLSTSSLECTINPIATPIPKPEAHIFRAEVISTTLNTNPLTTPPKPAMNRQESLRENIEKITQLQSVLMSAHLCDASLLGGYTTPLITSPTASFANEPLMTPPLPPSPPPPLEPEEEEEQEENDVHDKQPEIEELQLMQRSELVLMVNPKPSTTDMACQTDELEDRDTDLEAAREEHQTRTTLQPRQRQPIELDYEQMSRELVKLLPPGDKIADILTPKICKPTSQYVSNLYNPDVPLRLAKRDVGTSTLMRMKSITSSAEIRVVSVELQLAEPSEEPTNLIKQKMDELIKHLNQKIVSLKREQQTISEECSANDRLGQDLFAKLAEKVRPSEASKFRTHVDAVGNITSLLLSLSERLAQTESSLETRQQERGALESKRDLLYEQMEEAQRLKSDIERRGVSIAGLLAKNLSADMCADYDYFINMKAKLIADARDLAVRIKGSEEQLSSLSDALVQSDC.

Disordered regions lie at residues 1–31 (MKMRNHKENGNGSEMGESTKSLAKMEPENNN), 46–100 (SNGA…TQAG), 112–142 (YDQTAFHHQKQPSYAQSEGYHSYVSSSDSTS), 187–244 (RQSH…SSTE), 267–434 (ISES…ISVT), 589–609 (VERQQQQQKEEQQLLRPHSQS), and 621–660 (PNNLSPIMVGLPTGSNSASTRDCSSPTPPPPPRRSGSLLP). Positions 10-21 (GNGSEMGESTKS) are enriched in polar residues. 3 stretches are compositionally biased toward low complexity: residues 46–69 (SNGANSRSSNSNASFSSASVAGSV), 76–91 (HNSSSSQLGQQHGSSL), and 128–142 (SEGYHSYVSSSDSTS). A compositionally biased stretch (basic residues) spans 189 to 211 (SHSHSHSHAHSHSNSHGHSHGHA). Composition is skewed to low complexity over residues 212–244 (HSASSSSSSNNNSNGSATNNNNNNSSESTSSTE) and 267–283 (ISESVSSSQRIVHSSRV). The segment covering 305 to 317 (DSSPTASNSSQMM) has biased composition (polar residues). The segment covering 376-388 (QSTLSTQSSLLEL) has biased composition (low complexity). Residues 399–415 (MGQSHSMGDLQQKNPHQ) show a composition bias toward polar residues. Residue S404 is modified to Phosphoserine. Positions 445–920 (APQPPAGKPS…LESNQQKRSN (476 aa)) are F-actin binding region required for planar polarity and cortical localization. Over residues 633–643 (TGSNSASTRDC) the composition is skewed to polar residues. S667 and S668 each carry phosphoserine. 7 disordered regions span residues 699–728 (ISFNDCGMPPPPPPPRGRLAVPTRRTSSAT), 743–823 (AALA…NCFA), 849–876 (VPKKPTSLQHKHLANGGGGSRKRPHHAT), 910–939 (NLESNQQKRSNSKASYLPRQSLEKLNNTDP), 1036–1055 (GYGKSSKPVTPQQYTRSQSY), 1091–1116 (PTATPTPTPTPTPTPPRLSPASSHSD), and 1210–1244 (SFANEPLMTPPLPPSPPPPLEPEEEEEQEENDVHD). Residues 748 to 759 (QQHHPQQHRHAQ) are compositionally biased toward basic residues. Positions 798 to 816 (PLPPPPPPEVLQPRPPPSP) are enriched in pro residues. Composition is skewed to polar residues over residues 910–923 (NLESNQQKRSNSKA) and 1042–1055 (KPVTPQQYTRSQSY). 2 stretches are compositionally biased toward pro residues: residues 1094–1108 (TPTPTPTPTPTPPRL) and 1217–1229 (MTPPLPPSPPPPL). Residues 1230-1239 (EPEEEEEQEE) show a composition bias toward acidic residues. Residues 1232-1296 (EEEEEQEEND…LEAAREEHQT (65 aa)) adopt a coiled-coil conformation. An ASD2 domain is found at 1305-1572 (RQPIELDYEQ…QLSSLSDALV (268 aa)).

This sequence belongs to the shroom family. As to quaternary structure, monomer or homodimer. Interacts with Rok. Binds (via N-terminus) to F-actin.

It is found in the cell junction. Its subcellular location is the adherens junction. The protein localises to the cytoplasm. It localises to the cytoskeleton. The protein resides in the apical cell membrane. Functionally, binds to Rho-kinase Rok and targets it to the apical cell cortex where it mediates apical constriction. During embryogenic axis elongation, required for the localization to adherens junctions and the establishment of planar polarization of both Rho-kinase Rok and myosin regulatory light chain sqh. May be involved in the assembly of microtubule arrays during cell elongation. In Drosophila melanogaster (Fruit fly), this protein is Protein Shroom.